Reading from the N-terminus, the 297-residue chain is Nucleotide-binding protein CJA_2809 (297 aa).

8–15 (GLSGSGKT) lines the ATP pocket. GTP is bound at residue 59–62 (DVRN).

It belongs to the RapZ-like family.

Displays ATPase and GTPase activities. The polypeptide is Nucleotide-binding protein CJA_2809 (Cellvibrio japonicus (strain Ueda107) (Pseudomonas fluorescens subsp. cellulosa)).